The primary structure comprises 197 residues: Rac-like GTP-binding protein 6 (197 aa).

13-20 lines the GTP pocket; sequence GDGAVGKT. Residues 35-43 carry the Effector region motif; that stretch reads YVPTVFDNF. GTP contacts are provided by residues 60–64 and 118–121; these read DTAGQ and TKLD. Cysteine 194 is modified (cysteine methyl ester). Cysteine 194 carries S-geranylgeranyl cysteine lipidation. The propeptide at 195–197 is removed in mature form; it reads SIL.

It belongs to the small GTPase superfamily. Rho family.

The protein resides in the cytoplasm. Its subcellular location is the membrane. In terms of biological role, inactive GDP-bound Rho GTPases reside in the cytosol, are found in a complex with Rho GDP-dissociation inhibitors (Rho GDIs), and are released from the GDI protein in order to translocate to membranes upon activation. The polypeptide is Rac-like GTP-binding protein 6 (RAC6) (Oryza sativa subsp. japonica (Rice)).